Here is a 237-residue protein sequence, read N- to C-terminus: Small ribosomal subunit protein uS17m (237 aa).

It belongs to the universal ribosomal protein uS17 family. As to quaternary structure, component of the mitochondrial small ribosomal subunit (mt-SSU). Mature yeast 74S mitochondrial ribosomes consist of a small (37S) and a large (54S) subunit. The 37S small subunit contains a 15S ribosomal RNA (15S mt-rRNA) and 34 different proteins. The 54S large subunit contains a 21S rRNA (21S mt-rRNA) and 46 different proteins.

It is found in the mitochondrion. Functionally, component of the mitochondrial ribosome (mitoribosome), a dedicated translation machinery responsible for the synthesis of mitochondrial genome-encoded proteins, including at least some of the essential transmembrane subunits of the mitochondrial respiratory chain. The mitoribosomes are attached to the mitochondrial inner membrane and translation products are cotranslationally integrated into the membrane. uS17m may have a meiosis-specific role as it accumulates during the middle stage of sporulation. This Saccharomyces cerevisiae (strain ATCC 204508 / S288c) (Baker's yeast) protein is Small ribosomal subunit protein uS17m (MRPS17).